We begin with the raw amino-acid sequence, 397 residues long: Subtilisin-like protease 3 (397 aa).

Residues 1–19 (MGCIKVISVFLAAIAAVDA) form the signal peptide. Residues 20–116 (RAFFHNRGGS…VEHDRVVKLA (97 aa)) constitute a propeptide that is removed on maturation. Positions 35–116 (SYIVVMKDGV…VEHDRVVKLA (82 aa)) constitute an Inhibitor I9 domain. A Peptidase S8 domain is found at 126–397 (TWGLGRVSHR…NRLLYNGSGQ (272 aa)). Active-site charge relay system residues include aspartate 158 and histidine 189. Residue asparagine 250 is glycosylated (N-linked (GlcNAc...) asparagine). Serine 344 serves as the catalytic Charge relay system. Asparagine 393 carries an N-linked (GlcNAc...) asparagine glycan.

This sequence belongs to the peptidase S8 family.

It localises to the secreted. In terms of biological role, secreted subtilisin-like serine protease with keratinolytic activity that contributes to pathogenicity. This chain is Subtilisin-like protease 3 (SUB3), found in Trichophyton equinum (Horse ringworm fungus).